Here is a 184-residue protein sequence, read N- to C-terminus: Large ribosomal subunit protein bL9 (184 aa).

The segment at 160-184 (LQNQKSEQQEAEQDANKEATDGDDS) is disordered. Residues 173-184 (DANKEATDGDDS) are compositionally biased toward basic and acidic residues.

The protein belongs to the bacterial ribosomal protein bL9 family.

Its function is as follows. Binds to the 23S rRNA. This chain is Large ribosomal subunit protein bL9, found in Wolbachia pipientis wMel.